Here is a 216-residue protein sequence, read N- to C-terminus: Ribonuclease HII (216 aa).

An RNase H type-2 domain is found at 27 to 216 (ASLAGVDEAG…VKEHVKNCEG (190 aa)). Residues aspartate 33, glutamate 34, and aspartate 125 each coordinate a divalent metal cation.

It belongs to the RNase HII family. Requires Mn(2+) as cofactor. Mg(2+) serves as cofactor.

The protein resides in the cytoplasm. The enzyme catalyses Endonucleolytic cleavage to 5'-phosphomonoester.. In terms of biological role, endonuclease that specifically degrades the RNA of RNA-DNA hybrids. The sequence is that of Ribonuclease HII from Geotalea daltonii (strain DSM 22248 / JCM 15807 / FRC-32) (Geobacter daltonii).